Reading from the N-terminus, the 133-residue chain is Methylglyoxal synthase (133 aa).

The MGS-like domain maps to 1-133 (MPPKPRIALI…ARENGAAQAG (133 aa)). Substrate contacts are provided by residues histidine 12, lysine 16, 38-41 (TGTT), and 58-59 (SG). Aspartate 64 serves as the catalytic Proton donor/acceptor. Position 91 (histidine 91) interacts with substrate.

It belongs to the methylglyoxal synthase family.

The catalysed reaction is dihydroxyacetone phosphate = methylglyoxal + phosphate. In terms of biological role, catalyzes the formation of methylglyoxal from dihydroxyacetone phosphate. The sequence is that of Methylglyoxal synthase from Cupriavidus taiwanensis (strain DSM 17343 / BCRC 17206 / CCUG 44338 / CIP 107171 / LMG 19424 / R1) (Ralstonia taiwanensis (strain LMG 19424)).